Reading from the N-terminus, the 555-residue chain is Protein NRT1/ PTR FAMILY 2.1 (555 aa).

Helical transmembrane passes span threonine 32–isoleucine 52, isoleucine 68–phenylalanine 88, isoleucine 91–isoleucine 111, isoleucine 127–valine 147, phenylalanine 175–valine 195, leucine 205–lysine 225, valine 324–methionine 344, valine 369–isoleucine 389, leucine 401–valine 421, valine 437–alanine 457, serine 476–isoleucine 496, and tryptophan 517–phenylalanine 537.

Belongs to the major facilitator superfamily. Proton-dependent oligopeptide transporter (POT/PTR) (TC 2.A.17) family. Expressed in roots.

It localises to the membrane. Functionally, transporter involved in a passive nitrate efflux. This Arabidopsis thaliana (Mouse-ear cress) protein is Protein NRT1/ PTR FAMILY 2.1 (NPF2.1).